The following is a 1078-amino-acid chain: Carbamoyl phosphate synthase large chain (1078 aa).

Residues 1–401 form a carboxyphosphate synthetic domain region; it reads MARQPLVSSV…ALQKAVRGLE (401 aa). Residues Arg129, Arg169, Gly175, Gly176, Arg208, Leu210, Glu215, Gly241, Val242, His243, Gln284, and Glu298 each coordinate ATP. Positions 133 to 327 constitute an ATP-grasp 1 domain; it reads KELLLEIGEP…IARIAAKLAI (195 aa). Mg(2+)-binding residues include Gln284, Glu298, and Asn300. The Mn(2+) site is built by Gln284, Glu298, and Asn300. The tract at residues 402 to 546 is oligomerization domain; it reads TDQTDLTWED…YATYEDENEA (145 aa). The interval 547-935 is carbamoyl phosphate synthetic domain; it reads PPLDSPKAVV…ALAKAFLAAG (389 aa). An ATP-grasp 2 domain is found at 677 to 867; the sequence is ERFLHELGIP…MVDVATQILL (191 aa). The ATP site is built by Arg713, Lys752, Leu754, Glu758, Gly783, Val784, His785, Ser786, Gln826, and Glu838. Mg(2+) contacts are provided by Gln826, Glu838, and Asn840. Positions 826, 838, and 840 each coordinate Mn(2+). The region spanning 936 to 1078 is the MGS-like domain; that stretch reads LAIERGAPVL…AYRTREAVLA (143 aa). Residues 936–1078 are allosteric domain; that stretch reads LAIERGAPVL…AYRTREAVLA (143 aa).

This sequence belongs to the CarB family. As to quaternary structure, composed of two chains; the small (or glutamine) chain promotes the hydrolysis of glutamine to ammonia, which is used by the large (or ammonia) chain to synthesize carbamoyl phosphate. Tetramer of heterodimers (alpha,beta)4. It depends on Mg(2+) as a cofactor. Mn(2+) serves as cofactor.

The catalysed reaction is hydrogencarbonate + L-glutamine + 2 ATP + H2O = carbamoyl phosphate + L-glutamate + 2 ADP + phosphate + 2 H(+). The enzyme catalyses hydrogencarbonate + NH4(+) + 2 ATP = carbamoyl phosphate + 2 ADP + phosphate + 2 H(+). It functions in the pathway amino-acid biosynthesis; L-arginine biosynthesis; carbamoyl phosphate from bicarbonate: step 1/1. The protein operates within pyrimidine metabolism; UMP biosynthesis via de novo pathway; (S)-dihydroorotate from bicarbonate: step 1/3. Its function is as follows. Large subunit of the glutamine-dependent carbamoyl phosphate synthetase (CPSase). CPSase catalyzes the formation of carbamoyl phosphate from the ammonia moiety of glutamine, carbonate, and phosphate donated by ATP, constituting the first step of 2 biosynthetic pathways, one leading to arginine and/or urea and the other to pyrimidine nucleotides. The large subunit (synthetase) binds the substrates ammonia (free or transferred from glutamine from the small subunit), hydrogencarbonate and ATP and carries out an ATP-coupled ligase reaction, activating hydrogencarbonate by forming carboxy phosphate which reacts with ammonia to form carbamoyl phosphate. The polypeptide is Carbamoyl phosphate synthase large chain (Thermomicrobium roseum (strain ATCC 27502 / DSM 5159 / P-2)).